Reading from the N-terminus, the 142-residue chain is ATP synthase epsilon chain (142 aa).

Belongs to the ATPase epsilon chain family. F-type ATPases have 2 components, CF(1) - the catalytic core - and CF(0) - the membrane proton channel. CF(1) has five subunits: alpha(3), beta(3), gamma(1), delta(1), epsilon(1). CF(0) has three main subunits: a, b and c.

It is found in the cell inner membrane. Its function is as follows. Produces ATP from ADP in the presence of a proton gradient across the membrane. The sequence is that of ATP synthase epsilon chain from Shewanella putrefaciens (strain CN-32 / ATCC BAA-453).